Reading from the N-terminus, the 286-residue chain is 2-hydroxy-6-oxononadienedioate/2-hydroxy-6-oxononatrienedioate hydrolase 2 (286 aa).

His-266 acts as the Proton acceptor in catalysis.

The protein belongs to the AB hydrolase superfamily. MhpC family. Homodimer.

It carries out the reaction (2Z,4E)-2-hydroxy-6-oxonona-2,4-dienedioate + H2O = (2Z)-2-hydroxypenta-2,4-dienoate + succinate + H(+). It catalyses the reaction (2Z,4E,7E)-2-hydroxy-6-oxonona-2,4,7-trienedioate + H2O = (2Z)-2-hydroxypenta-2,4-dienoate + fumarate + H(+). Its pathway is aromatic compound metabolism; 3-phenylpropanoate degradation. In terms of biological role, catalyzes the cleavage of the C5-C6 bond of 2-hydroxy-6-oxononadienedioate and 2-hydroxy-6-oxononatrienedioate, a dienol ring fission product of the bacterial meta-cleavage pathway for degradation of phenylpropionic acid. The polypeptide is 2-hydroxy-6-oxononadienedioate/2-hydroxy-6-oxononatrienedioate hydrolase 2 (Pseudomonas putida (Arthrobacter siderocapsulatus)).